The sequence spans 560 residues: Platelet glycoprotein V (560 aa).

The signal sequence occupies residues 1-16; the sequence is MLRGTLLCAVLGLLRA. An LRRNT domain is found at 17–50; it reads QPFPCPPACKCVFRDAAQCSGGDVARISALGLPT. Residues 17 to 523 lie on the Extracellular side of the membrane; sequence QPFPCPPACK…KGQDHSPFWG (507 aa). Asn-51 carries N-linked (GlcNAc...) asparagine glycosylation. LRR repeat units follow at residues 75-96, 99-120, 123-144, 147-168, 171-193, 195-216, 219-240, 243-264, 267-288, 291-312, 340-361, 364-385, and 388-409; these read VLQR…TFSD, KLKT…LLDK, LLEQ…MFQK, NLQE…LFTN, NLKL…LGAQ, KLER…LLNS, ALTE…AFDR, NLSS…LFLH, NLTL…LFGE, GLQE…AFRN, ELQV…LLRG, KLRQ…LFRN, and SLES…VFGA. Residue Asn-181 is glycosylated (N-linked (GlcNAc...) (complex) asparagine). Asn-243 is a glycosylation site (N-linked (GlcNAc...) (complex) asparagine). N-linked (GlcNAc...) asparagine glycans are attached at residues Asn-267, Asn-298, and Asn-312. Asn-385 carries N-linked (GlcNAc...) asparagine glycosylation. An LRRCT domain is found at 421 to 474; that stretch reads NSWRCDCGLGPFLGWLRQHLGLVGGEEPPRCAGPGAHAGLPLWALPGGDAECPG. Positions 469-498 are disordered; sequence DAECPGPRGPPPRPAADSSSEAPVHPALAP. Asn-499 is a glycosylation site (N-linked (GlcNAc...) asparagine). The chain crosses the membrane as a helical span at residues 524–544; that stretch reads FYFLLLAVQAMITVIIVFAMI. Residues 545–560 lie on the Cytoplasmic side of the membrane; sequence KIGQLFRKLIRERALG.

Post-translationally, the N-terminus is blocked. In terms of tissue distribution, platelets and megakaryocytes.

Its subcellular location is the membrane. The GPIb-V-IX complex functions as the vWF receptor and mediates vWF-dependent platelet adhesion to blood vessels. The adhesion of platelets to injured vascular surfaces in the arterial circulation is a critical initiating event in hemostasis. This is Platelet glycoprotein V (GP5) from Homo sapiens (Human).